The sequence spans 1055 residues: Sodium/potassium exporting P-type ATPase 1 (1055 aa).

The Cytoplasmic segment spans residues 1-73; sequence MTPSIGYVDE…GADEKISISK (73 aa). Residues 74 to 94 traverse the membrane as a helical segment; sequence ILAHQIFNAMVLVLIISLIIA. Residues 95–99 lie on the Extracellular side of the membrane; the sequence is LAIKD. The chain crosses the membrane as a helical span at residues 100-120; that stretch reads WISGGVIGFVVFINIFVGFIQ. Topologically, residues 121 to 298 are cytoplasmic; that stretch reads ELKAEKTMGS…TNVGTPLQRK (178 aa). The helical transmembrane segment at 299 to 319 threads the bilayer; the sequence is LSWLAILLFWVAVLFAIVVMA. Topologically, residues 320-328 are extracellular; that stretch reads SQEMRVNRN. The helical transmembrane segment at 329–349 threads the bilayer; the sequence is VAIYAICVALSMIPSSLVVVL. Topologically, residues 350–789 are cytoplasmic; it reads TITMAIGAQV…RMSSNIQKFV (440 aa). Catalysis depends on Asp385, which acts as the 4-aspartylphosphate intermediate. Residues Asp385 and Thr387 each coordinate Mg(2+). ATP-binding residues include Thr387, Glu491, Lys544, Arg586, Thr646, Gly647, Asp648, Arg705, and Lys711. Asp730 contributes to the Mg(2+) binding site. Asn733 provides a ligand contact to ATP. A helical transmembrane segment spans residues 790–810; that stretch reads LQLLAENVAQALYLMIGLAFI. Residues 811–816 lie on the Extracellular side of the membrane; the sequence is DKSGYS. Residues 817–837 form a helical membrane-spanning segment; sequence VFPLSPVEVLWIIVVTSCFPA. Residues 838–866 are Cytoplasmic-facing; the sequence is MGLGQEKASHDILEQPPNATIFTWEVIID. Residues 867–887 traverse the membrane as a helical segment; the sequence is MIAYGFWMAVCCLVCFVCIVY. Over 888–913 the chain is Extracellular; sequence GKGDGSLGENCNEGSDTGCNLVFRGR. A helical transmembrane segment spans residues 914 to 934; sequence SGAFAAFTWCALLLAWECIHL. The Cytoplasmic portion of the chain corresponds to 935-962; sequence RLSFFKMRPELENPWWKQLAIDLWDNQF. A helical transmembrane segment spans residues 963–983; the sequence is LFWSVMGAIVSVFPVVYIPVI. Over 984–990 the chain is Extracellular; the sequence is NNKVFLH. A helical transmembrane segment spans residues 991–1011; it reads APIGYEWGLAVAFTILFLIGA. At 1012–1055 the chain is on the cytoplasmic side; sequence EGWKWFKRVYYRKSNANNPEYDLERNDPFKEYSSFSKSNTMEIV.

Belongs to the cation transport ATPase (P-type) (TC 3.A.3) family. Type IID subfamily. Mg(2+) is required as a cofactor. Post-translationally, the active site is phosphorylated in presence of sodium or potassium and in conditions of higher pH. Not phosphorylated in presence of calcium ions.

The protein localises to the cell membrane. It carries out the reaction Na(+)(in) + ATP + H2O = Na(+)(out) + ADP + phosphate + H(+). It catalyses the reaction K(+)(in) + ATP + H2O = K(+)(out) + ADP + phosphate + H(+). Catalyzes the hydrolysis of ATP coupled with the export of sodium and potassium from the cell. May be an inefficient potassium exporter. May transport other cations such as lithium. Sodium/potassium efflux ATPases are involved in salt tolerance and maintaining the membrane potential across the plasma membrane in high salinity (Na+) or alkaline (K+) environments. The sequence is that of Sodium/potassium exporting P-type ATPase 1 from Schwanniomyces occidentalis (Yeast).